Reading from the N-terminus, the 310-residue chain is Homeobox protein Hox-A13a (310 aa).

The segment at residues 244–303 (GRKKRVPYTKVQLKELEREYATNKFITKDKRRRISAQTNLSERQVTIWFQNRRVKEKKVV) is a DNA-binding region (homeobox).

The protein belongs to the Abd-B homeobox family.

It is found in the nucleus. In terms of biological role, sequence-specific transcription factor which is part of a developmental regulatory system that provides cells with specific positional identities on the anterior-posterior axis. The chain is Homeobox protein Hox-A13a (hoxa13a) from Danio rerio (Zebrafish).